The primary structure comprises 101 residues: DNA-binding protein TubR (101 aa).

In terms of assembly, homodimer. Dimers bind to DNA, forming a protein-bound filament which may form a helix around the TubZ filament.

Its function is as follows. A DNA-binding protein that is part of the type III plasmid partition system used to ensure correct segregation of the pBM400 plasmid. Binds the plasmid origin of replication, probably cooperatively, forming a ring or short helix with external DNA. Its effect on RNA expression has not been shown. The chain is DNA-binding protein TubR from Priestia megaterium (strain ATCC 12872 / QMB1551) (Bacillus megaterium).